Reading from the N-terminus, the 229-residue chain is Synaptogyrin-3 (229 aa).

The residue at position 1 (M1) is an N-acetylmethionine. Residues 20 to 172 (FARRPQTLLR…LTVKALQRFR (153 aa)) enclose the MARVEL domain. Helical transmembrane passes span 30 to 50 (VASWVFSIAVFGPIVNEGYVN), 70 to 90 (FGVALGLGAFLACAAFLLLDV), 105 to 125 (VLLDLGFSGLWSFLWFVGFCF), and 148 to 168 (AAIAFSFFSILSWVALTVKAL). The span at 209–219 (QSPPFTETLDT) shows a compositional bias: polar residues. The disordered stretch occupies residues 209–229 (QSPPFTETLDTSPKGYQVPAY).

This sequence belongs to the synaptogyrin family. In terms of assembly, interacts (via N-terminus) with SLC6A3 (via N-terminus). May interact with VMAT2. In terms of tissue distribution, expressed in brain and placenta.

It is found in the cytoplasmic vesicle. The protein resides in the secretory vesicle. Its subcellular location is the synaptic vesicle membrane. The protein localises to the synapse. In terms of biological role, may play a role in regulated exocytosis. May indirectly regulate the activity of the plasma membrane dopamine transporter SLC6A3 and thereby regulate dopamine transport back from the synaptic cleft into the presynaptic terminal. The polypeptide is Synaptogyrin-3 (Homo sapiens (Human)).